Here is a 506-residue protein sequence, read N- to C-terminus: TOM1-like protein 3 (506 aa).

The VHS domain maps to 12 to 141 (ATNDMLIGPD…ELRSAGIEFP (130 aa)). The 89-residue stretch at 180-268 (DASALSMEEI…VLQHHDDKAK (89 aa)) folds into the GAT domain. Disordered stretches follow at residues 266–328 (KAKG…PPSS), 351–384 (ETFENVKPPSTSQSSNHDYSAPIFDEPVPQSKSP), and 398–477 (EQLP…PEDI). Positions 288-298 (DDDDDESDDDF) are enriched in acidic residues. Ser-294 carries the phosphoserine modification. Polar residues predominate over residues 358–368 (PPSTSQSSNHD). At Ser-383 the chain carries Phosphoserine. A compositionally biased stretch (polar residues) spans 450-460 (QSRNLSLNPTA). A compositionally biased stretch (basic and acidic residues) spans 468-477 (PKKDDKPEDI).

This sequence belongs to the TOM1 family. In terms of tissue distribution, preferentially expressed in cauline leaves.

The protein localises to the membrane. Might contribute to the loading of the ESCRT machinery. The protein is TOM1-like protein 3 of Arabidopsis thaliana (Mouse-ear cress).